Consider the following 413-residue polypeptide: Calsequestrin-2 (413 aa).

Residues 1–19 (MKRIYLLVVGLYLLSFSRA) form the signal peptide. Tyr282 carries the post-translational modification Phosphotyrosine. N-linked (GlcNAc...) asparagine glycosylation occurs at Asn335. The segment at 365–413 (VLSGKINTEDDDNEDEDDDGDNDNDDDDDDDDNSDEDNDDSDDDDDDDE) is disordered. Positions 373–413 (EDDDNEDEDDDGDNDNDDDDDDDDNSDEDNDDSDDDDDDDE) are enriched in acidic residues. Residues Ser398 and Ser405 each carry the phosphoserine modification.

This sequence belongs to the calsequestrin family. Monomer, homodimer and homooligomer. Mostly monomeric in the absence of calcium. Forms higher oligomers in a calcium-dependent manner. Dimers associate to form tetramers, that then form linear homomer chains. Interacts with ASPH and TRDN. Phosphorylation in the C-terminus, probably by CK2, moderately increases calcium buffering capacity. Post-translationally, N-glycosylated. In terms of tissue distribution, detected in stomach and vas deferens (at protein level).

The protein localises to the sarcoplasmic reticulum lumen. Its function is as follows. Calsequestrin is a high-capacity, moderate affinity, calcium-binding protein and thus acts as an internal calcium store in muscle. Calcium ions are bound by clusters of acidic residues at the protein surface, especially at the interface between subunits. Can bind around 60 Ca(2+) ions. Regulates the release of lumenal Ca(2+) via the calcium release channel RYR2; this plays an important role in triggering muscle contraction. Plays a role in excitation-contraction coupling in the heart and in regulating the rate of heart beats. This Rattus norvegicus (Rat) protein is Calsequestrin-2 (Casq2).